Here is a 323-residue protein sequence, read N- to C-terminus: Fructose-1,6-bisphosphatase class 1 (323 aa).

Mg(2+) is bound by residues Glu-88, Asp-107, Leu-109, and Asp-110. Substrate is bound by residues 110–113 and Asn-200; that span reads DGSS. Position 272 (Glu-272) interacts with Mg(2+).

It belongs to the FBPase class 1 family. Homotetramer. The cofactor is Mg(2+).

It localises to the cytoplasm. It carries out the reaction beta-D-fructose 1,6-bisphosphate + H2O = beta-D-fructose 6-phosphate + phosphate. It participates in carbohydrate biosynthesis; gluconeogenesis. This Acinetobacter baumannii (strain ACICU) protein is Fructose-1,6-bisphosphatase class 1.